We begin with the raw amino-acid sequence, 147 residues long: Myosin-2 essential light chain (147 aa).

3 consecutive EF-hand domains span residues 7 to 42 (DQLA…LGQN), 80 to 115 (DTAD…LGEK), and 115 to 147 (KLTD…VMSG). Ser30 bears the Phosphoserine mark. Ca(2+)-binding residues include Asp93, Asp95, Ser97, Tyr99, and Glu104.

Myosin is a hexamer of 2 heavy chains and 4 light chains.

The chain is Myosin-2 essential light chain (Mlc-c) from Drosophila melanogaster (Fruit fly).